The following is a 630-amino-acid chain: tRNA uridine 5-carboxymethylaminomethyl modification enzyme MnmG (630 aa).

13 to 18 is a binding site for FAD; the sequence is GGGHAG. Position 273 to 287 (273 to 287) interacts with NAD(+); sequence GPRYCPSIEDKIHRF.

Belongs to the MnmG family. As to quaternary structure, homodimer. Heterotetramer of two MnmE and two MnmG subunits. It depends on FAD as a cofactor.

The protein resides in the cytoplasm. Its function is as follows. NAD-binding protein involved in the addition of a carboxymethylaminomethyl (cmnm) group at the wobble position (U34) of certain tRNAs, forming tRNA-cmnm(5)s(2)U34. The protein is tRNA uridine 5-carboxymethylaminomethyl modification enzyme MnmG of Pseudomonas putida (strain GB-1).